Here is a 187-residue protein sequence, read N- to C-terminus: Elongation factor P (187 aa).

The protein belongs to the elongation factor P family.

The protein localises to the cytoplasm. It participates in protein biosynthesis; polypeptide chain elongation. Involved in peptide bond synthesis. Stimulates efficient translation and peptide-bond synthesis on native or reconstituted 70S ribosomes in vitro. Probably functions indirectly by altering the affinity of the ribosome for aminoacyl-tRNA, thus increasing their reactivity as acceptors for peptidyl transferase. This Parafrankia sp. (strain EAN1pec) protein is Elongation factor P.